The chain runs to 92 residues: Signal recognition particle 19 kDa protein (92 aa).

Belongs to the SRP19 family. In terms of assembly, part of the signal recognition particle protein translocation system, which is composed of SRP and FtsY. Archaeal SRP consists of a 7S RNA molecule of 300 nucleotides and two protein subunits: SRP54 and SRP19.

The protein localises to the cytoplasm. In terms of biological role, involved in targeting and insertion of nascent membrane proteins into the cytoplasmic membrane. Binds directly to 7S RNA and mediates binding of the 54 kDa subunit of the SRP. In Methanosphaera stadtmanae (strain ATCC 43021 / DSM 3091 / JCM 11832 / MCB-3), this protein is Signal recognition particle 19 kDa protein.